The chain runs to 715 residues: Dynein axonemal intermediate chain 7 (715 aa).

A disordered region spans residues 291-322 (AVSKDLQEENKQENESNSVHEEETKAEGQGDV). Positions 295 to 318 (DLQEENKQENESNSVHEEETKAEG) are enriched in basic and acidic residues.

It belongs to the DNAI7 family. In terms of assembly, part of the multisubunit axonemal dynein complex formed at least of two heavy chains and a number of intermediate and light chains. Associates with tubulin. Interacts with microtubule. Post-translationally, ubiquitinated. Ubiquitination leads to its degradation through the 26S proteasome. Ubiquitin-proteasome-mediated DNAI7 degradation occurs in mitosis.

It is found in the cell projection. The protein resides in the cilium. The protein localises to the cytoplasm. Via its association with the multisubunit axonemal dynein complex, is potentially involved in the regulation of cilia function. May act as a cell cycle regulator. The polypeptide is Dynein axonemal intermediate chain 7 (Bos taurus (Bovine)).